The following is a 469-amino-acid chain: Glutamate--tRNA ligase (469 aa).

A 'HIGH' region motif is present at residues 9 to 19 (PSPTGFLHVGG). Zn(2+) contacts are provided by Cys-98, Cys-100, Cys-125, and Asp-127. Positions 236–240 (KLSKR) match the 'KMSKS' region motif. Residue Lys-239 participates in ATP binding.

The protein belongs to the class-I aminoacyl-tRNA synthetase family. Glutamate--tRNA ligase type 1 subfamily. As to quaternary structure, monomer. It depends on Zn(2+) as a cofactor.

The protein resides in the cytoplasm. The catalysed reaction is tRNA(Glu) + L-glutamate + ATP = L-glutamyl-tRNA(Glu) + AMP + diphosphate. Functionally, catalyzes the attachment of glutamate to tRNA(Glu) in a two-step reaction: glutamate is first activated by ATP to form Glu-AMP and then transferred to the acceptor end of tRNA(Glu). In Shewanella baltica (strain OS185), this protein is Glutamate--tRNA ligase.